The chain runs to 410 residues: Ribosomal protein S6 kinase-related protein (410 aa).

The Protein kinase domain occupies 107-274 (LKILGLVAKG…GTLQYMAPEV (168 aa)). Residues 113 to 121 (VAKGSFGTV) and Lys136 contribute to the ATP site. Asp229 (proton acceptor) is an active-site residue.

Belongs to the protein kinase superfamily. Ser/Thr protein kinase family.

It catalyses the reaction L-seryl-[protein] + ATP = O-phospho-L-seryl-[protein] + ADP + H(+). The catalysed reaction is L-threonyl-[protein] + ATP = O-phospho-L-threonyl-[protein] + ADP + H(+). In Homo sapiens (Human), this protein is Ribosomal protein S6 kinase-related protein.